A 419-amino-acid chain; its full sequence is Vacuolar aspartic protease (419 aa).

The signal sequence occupies residues Met-1–Ala-22. In terms of domain architecture, Peptidase A1 spans Tyr-104–Ala-415. Residue Asp-122 is part of the active site. Residues Cys-135 and Cys-140 are joined by a disulfide bond. An N-linked (GlcNAc...) asparagine glycan is attached at Asn-157. Residue Asp-307 is part of the active site. The cysteines at positions 341 and 374 are disulfide-linked. N-linked (GlcNAc...) asparagine glycosylation occurs at Asn-358. Positions Thr-417–Val-419 match the Microbody targeting signal motif.

This sequence belongs to the peptidase A1 family.

The protein localises to the vacuole. The chain is Vacuolar aspartic protease (APR1) from Candida albicans (Yeast).